Consider the following 437-residue polypeptide: MSLNVDIGLGTYDFSKWGYIDVHKIKEVHIYDFDNTLFQTPLPNANIWSNQAIRILMAFNILANGGWFFDPHVLAATGDGVEVEEKRAWEGWWNEKIVSQARESIRRPDVLAVLLTGRNEGFRGIVEKIIASKGLDFQGVVFKLQAPDGFWPQTLNFKLWFFNEVYRHFLYINSTRIYEDRPSHIEAFSAWLTERKKKNKNADFEIIAVAEPPKYLKFKVEIALVRGMLTAHNLKAPSLKLPLYKFVKNVIATVVTVPVAELHHIRNAFFNIPIAEIMESVSANSSRRNSHDSNSTIICEPEYPPDTSFNSSPGRLWIVTAIGRYRDEYWTVRAEAAEGYDCEKIHEIDVADIPSLYGTILYVSMSTGIVKSEIGDIGAQQWKTLAPSERWILRTNIRKECTYDIRYKRPYVSSLKYSDDDLTAGRASPMTGPTKRK.

Phosphoserine occurs at positions 290 and 293. Phosphothreonine is present on threonine 296. Phosphoserine is present on residues serine 418 and serine 428.

This is an uncharacterized protein from Schizosaccharomyces pombe (strain 972 / ATCC 24843) (Fission yeast).